The primary structure comprises 272 residues: Dermonecrotic toxin LvSicTox-alphaIC1biv (272 aa).

The active site involves histidine 5. Mg(2+) is bound by residues glutamate 25 and aspartate 27. Residue histidine 41 is the Nucleophile of the active site. Intrachain disulfides connect cysteine 45–cysteine 51 and cysteine 47–cysteine 189. Aspartate 84 lines the Mg(2+) pocket.

Belongs to the arthropod phospholipase D family. Class II subfamily. The cofactor is Mg(2+). Expressed by the venom gland.

It localises to the secreted. The catalysed reaction is an N-(acyl)-sphingosylphosphocholine = an N-(acyl)-sphingosyl-1,3-cyclic phosphate + choline. It carries out the reaction an N-(acyl)-sphingosylphosphoethanolamine = an N-(acyl)-sphingosyl-1,3-cyclic phosphate + ethanolamine. The enzyme catalyses a 1-acyl-sn-glycero-3-phosphocholine = a 1-acyl-sn-glycero-2,3-cyclic phosphate + choline. It catalyses the reaction a 1-acyl-sn-glycero-3-phosphoethanolamine = a 1-acyl-sn-glycero-2,3-cyclic phosphate + ethanolamine. Dermonecrotic toxins cleave the phosphodiester linkage between the phosphate and headgroup of certain phospholipids (sphingolipid and lysolipid substrates), forming an alcohol (often choline) and a cyclic phosphate. This toxin acts on sphingomyelin (SM). It may also act on ceramide phosphoethanolamine (CPE), lysophosphatidylcholine (LPC) and lysophosphatidylethanolamine (LPE), but not on lysophosphatidylserine (LPS), and lysophosphatidylglycerol (LPG). It acts by transphosphatidylation, releasing exclusively cyclic phosphate products as second products. Induces dermonecrosis, hemolysis, increased vascular permeability, edema, inflammatory response, and platelet aggregation. In Loxosceles variegata (Recluse spider), this protein is Dermonecrotic toxin LvSicTox-alphaIC1biv.